A 126-amino-acid chain; its full sequence is MSREFKRSDRVAQELQKEIAVILQREVKDPRIGMVTVSDVEVSRDLAYAKIFVTFLFDNDQDIIAQGMKGLEKAGPYIRTLLGKAMRLRILPELRFIYDQSLVEGMRMSNLVSNVIKSDQAKHKED.

It belongs to the RbfA family. Monomer. Binds 30S ribosomal subunits, but not 50S ribosomal subunits or 70S ribosomes.

The protein resides in the cytoplasm. Functionally, one of several proteins that assist in the late maturation steps of the functional core of the 30S ribosomal subunit. Associates with free 30S ribosomal subunits (but not with 30S subunits that are part of 70S ribosomes or polysomes). Required for efficient processing of 16S rRNA. May interact with the 5'-terminal helix region of 16S rRNA. The chain is Ribosome-binding factor A from Haemophilus ducreyi (strain 35000HP / ATCC 700724).